Reading from the N-terminus, the 479-residue chain is Sulfate adenylyltransferase subunit 1 (479 aa).

Residues 25–239 (KSLLRFLTCG…EVLETVDIQR (215 aa)) form the tr-type G domain. The tract at residues 34 to 41 (GSVDDGKS) is G1. A GTP-binding site is contributed by 34 to 41 (GSVDDGKS). The segment at 92 to 96 (GITID) is G2. The G3 stretch occupies residues 113-116 (DTPG). GTP is bound by residues 113 to 117 (DTPGH) and 168 to 171 (NKMD). A G4 region spans residues 168-171 (NKMD). The segment at 206–208 (SAL) is G5.

The protein belongs to the TRAFAC class translation factor GTPase superfamily. Classic translation factor GTPase family. CysN/NodQ subfamily. In terms of assembly, heterodimer composed of CysD, the smaller subunit, and CysN.

It carries out the reaction sulfate + ATP + H(+) = adenosine 5'-phosphosulfate + diphosphate. It participates in sulfur metabolism; hydrogen sulfide biosynthesis; sulfite from sulfate: step 1/3. Its function is as follows. With CysD forms the ATP sulfurylase (ATPS) that catalyzes the adenylation of sulfate producing adenosine 5'-phosphosulfate (APS) and diphosphate, the first enzymatic step in sulfur assimilation pathway. APS synthesis involves the formation of a high-energy phosphoric-sulfuric acid anhydride bond driven by GTP hydrolysis by CysN coupled to ATP hydrolysis by CysD. This chain is Sulfate adenylyltransferase subunit 1, found in Salmonella heidelberg (strain SL476).